The chain runs to 818 residues: Hillarin (818 aa).

Positions 9-76 constitute an LIM zinc-binding domain; the sequence is STCLRCSETV…SSHVPKSGPG (68 aa). A disordered region spans residues 97–141; that stretch reads FVNEQIRGTRSEVDGGPLGGSRQSTPNGYGSREISSPSQNDSDYK. The segment covering 117–137 has biased composition (polar residues); that stretch reads SRQSTPNGYGSREISSPSQND. Positions 216–272 form a coiled coil; the sequence is QDEWERELQRLTHKFEKELATSRRSRDEANILTMRHEQQKEDLEKNMTLRRSKKKES.

The protein belongs to the transglutaminase-like superfamily. Interacts with pnut. Localizes to the neuropil of the embryonic central nervous system (at protein level). Also detected in third instar larval brain (at protein level).

Its subcellular location is the cytoplasm. It localises to the cell cortex. The protein localises to the cleavage furrow. In terms of biological role, may act as a modulator of septin function during cytokinesis in the developing nervous system. The chain is Hillarin from Drosophila melanogaster (Fruit fly).